The chain runs to 164 residues: Cytochrome c-type biogenesis protein CcmE (164 aa).

The Cytoplasmic segment spans residues 1-8 (MNPRRKSR). Residues 9-29 (LYLAMVVLIGISLTTTLVLYA) form a helical; Signal-anchor for type II membrane protein membrane-spanning segment. Residues 30–164 (LRSNIDLFYT…RGTNTTGNAL (135 aa)) are Periplasmic-facing. The heme site is built by H130 and Y134. Positions 140–164 (EEAMKENHSRPAAAYRGTNTTGNAL) are disordered.

The protein belongs to the CcmE/CycJ family.

Its subcellular location is the cell inner membrane. In terms of biological role, heme chaperone required for the biogenesis of c-type cytochromes. Transiently binds heme delivered by CcmC and transfers the heme to apo-cytochromes in a process facilitated by CcmF and CcmH. The protein is Cytochrome c-type biogenesis protein CcmE of Yersinia pseudotuberculosis serotype O:3 (strain YPIII).